The sequence spans 446 residues: MPKRTFTKDDIRKFAEEENVRYLRLQFTDILGTIKNVEVPVSQLEKVLDNEMMFDGSSIEGFVRIEESDMYLHPDLDTWVIFPWTAGQGKVARLICDVYKTDGTPFEGDPRANLKRVLKEMEDLGFTDFNLGPEPEFFLFKLDEKGEPTLELNDDGGYFDLAPTDLGENCRRDIVLELEDMGFDIEASHHEVAPGQHEIDFKYADAVTACDNIQTFKLVVKTIARKHNLHATFMPKPLFGVNGSGMHFNVSLFKGKENAFFDPNTEMGLTETAYQFTAGVLKNARGFTAVCNPLVNSYKRLVPGYEAPCYIAWSGKNRSPLIRVPSSRGLSTRIEVRSVDPAANPYMALAAILEAGLDGIKNKLKVPEPVNQNIYEMNREEREAVGIQDLPSTLYTALKAMRENEVIKKALGNHIYNQFINSKSIEWDYYRTQVSEWERDQYMKQY.

The region spanning 18-103 is the GS beta-grasp domain; the sequence is ENVRYLRLQF…LICDVYKTDG (86 aa). A GS catalytic domain is found at 110-446; the sequence is PRANLKRVLK…WERDQYMKQY (337 aa). Glutamate 134 and glutamate 136 together coordinate Mg(2+). Position 186 (glutamate 186) interacts with ATP. Glutamate 191 and glutamate 198 together coordinate Mg(2+). Residues 242–243 and glycine 243 contribute to the L-glutamate site; that span reads NG. Histidine 247 contributes to the Mg(2+) binding site. Serine 251 lines the ATP pocket. L-glutamate contacts are provided by arginine 300, glutamate 306, and arginine 318. Residues arginine 318 and arginine 323 each contribute to the ATP site. Glutamate 335 serves as a coordination point for Mg(2+). Position 337 (arginine 337) interacts with L-glutamate.

It belongs to the glutamine synthetase family. As to quaternary structure, oligomer of 12 subunits arranged in the form of two hexagons. In its feedback-inhibited form, interacts with TnrA in order to block its DNA-binding activity. Mg(2+) serves as cofactor.

Its subcellular location is the cytoplasm. It catalyses the reaction L-glutamate + NH4(+) + ATP = L-glutamine + ADP + phosphate + H(+). Its activity is regulated as follows. Inhibited by glutamine. In terms of biological role, glutamine synthetase (GS) is an unusual multitasking protein that functions as an enzyme, a transcription coregulator, and a chaperone in ammonium assimilation and in the regulation of genes involved in nitrogen metabolism. It catalyzes the ATP-dependent biosynthesis of glutamine from glutamate and ammonia. Feedback-inhibited GlnA also interacts with and regulates the activity of the transcriptional regulator TnrA. During nitrogen limitation, TnrA is in its DNA-binding active state and turns on the transcription of genes required for nitrogen assimilation. Under conditions of nitrogen excess, feedback-inhibited GlnA forms a stable complex with TnrA, which inhibits its DNA-binding activity. In contrast, feedback-inhibited GlnA acts as a chaperone to stabilize the DNA-binding activity of GlnR, which represses the transcription of nitrogen assimilation genes. This is Glutamine synthetase from Staphylococcus aureus (strain MSSA476).